A 236-amino-acid polypeptide reads, in one-letter code: Regulatory protein cys-3 (236 aa).

The segment at threonine 26–arginine 89 is disordered. A compositionally biased stretch (polar residues) spans glycine 28 to proline 37. A bZIP domain is found at leucine 99–lysine 162. The segment at lysine 105 to lysine 137 is basic motif. Residues leucine 141 to leucine 155 are leucine-zipper. The segment at alanine 189 to aspartate 236 is disordered. Over residues aspartate 193–serine 211 the composition is skewed to basic and acidic residues. The segment covering serine 212–aspartate 223 has biased composition (low complexity).

This sequence belongs to the bZIP family. GCN4 subfamily. In terms of assembly, binds DNA as a dimer.

The protein localises to the nucleus. Its function is as follows. Turns on the expression of structural genes which encode sulfur-catabolic enzymes. Binds to sequence elements upstream of these genes. The polypeptide is Regulatory protein cys-3 (cys-3) (Neurospora crassa (strain ATCC 24698 / 74-OR23-1A / CBS 708.71 / DSM 1257 / FGSC 987)).